The chain runs to 2107 residues: MLRVFILYAENVHTPDTDISDAYCSAVFAGVKKRTKVIKNNVNPVWNEGFEWDLKGIPLDQGSELLVVVKDHETMGRNRFLGEANIPLREVLATPSLSASFNAPLLDTKKQPTGASLVLQVSYTPLPGAVPTFPPLTPLEPSPTLPDMDTVADTGGEEDTEDQGLTGDEAEPFLDQSGALGPGAPSTPKKQPSHPPPYHPGGGRKRSAPAPSKPLSDKPQDFQIRVQVIKGRQLPGVNIKPVVKVTAAGQTKRTRIHKGNSPVFNETLFFNVFDSPAELFNEPIFITVVDSRSLRTDALIGEFRLDVGSIYREPRHAYLRKWLLLSDPDDFSAGARGYLKASLCVLGPGDEAPLERKDPSEDKEDIESNLLRPIGVALRGAHFCLKVFRAEDLPQMDDAVMDNVRQIFGFDSNKKNLVDPFVEVSFAGKMLCSKILEKTANPQWNQSITLPAMFPSMCEKMRIRVVDWDRLTHNDIVATTYLSMSKISASGGEIEEEPAGVVKPPPATELDDHLGFLPTFGPCYINLYGSPREFTGFPDPYAELNTGKGEGVAYRGRLLLSLETKLVERSEQKVEALSADDILRVEKYLRRRKYSLFAAFYSATMLQDVDDAVQFEVSIGNYGNKFDTTCLPLASTTQYSRAVFDGCHYYYLPWGNVKPVVVLSSYWEDIRHRVEAQNQLLRIADQLEAGLEQVHLALKAQCSDEDVDSLVAQLMDELIAGCSQPLGDVQEMPSATHLDQYLYQLRTRHLSQITEAAQALKLGHSELPAALEQAEDWLLRLRALADEPQNSLPDIVIWMLQGDKRVAYQRVPAHEVLFSRRGTSYCGKNCGKLQTIFLKYPMEGVPRARMPVQIRVRLWFGLSVDEKEFNQFAEGKLSVFAETYENQTKLALVGNWGTTGLTYPKFSDITGRIKLPKDSFRPSAGWAWAGDWFVCPEKTLLHDTDAGHLSFVEEVFENQTRLPGGQWIYMSDNYTDVNGEKVLPKDDIECPLGWKWEDEEWSTDLNRAVDEQGWEYSITIPPDRKPRHWVPAEKMYYTHRRRRWVRLRRRDLSQMEALKRHRQAEAEGEGWEYASLFGWKFHLEYRKTDAFRRRRWRRRMEPLEKTGPAAVFALEGALGGVVDDRSEDSVSVSTLSFGVNRPTISCIFDYGNRYHLRCYMYQARDLPAMDKDSFSDPYAVVSFLHQSQKTVVAKNTLNPTWDQTLIFYEIEIFGEPSSIAEQPPSIVVELYDHDTYGVDEFMGRCICQPSLERTPRLAWFPLTRGSQPAGELLASFELIQREKPAIHHIPGFEVQDTTGILEESEDTDLPYPPPQREANIYMVPQNIKPVLQRTAIEILAWGLRNMKSYQLASVSSPSLVVECGGQSVQSCVIKNLRKNPNFDICTLFMEVMLPREELYCPPIVVKVIDNRQFGRRPVVGQCTIRSLEGFLCDPYSEESPSPQGGPDDVSLLSPGEDVLIDIDDKEPLIPIQFADGLSGLAPTNMASSPSSLHKILLEEEFIDWWSKFFASIGESEKCGSYLEKDFDTLKVYDTSLENVKAFEGLSDFCNTFKLYRGKTQEETEDPSVIGEFKGLFKIYPLPEDPAIPLPPRQFHQLASQGPQECLVRVYIIRAFGLQPKDPNGKCDPYIKISIGKKSVSDQDSYIPCTLEPVFGKMFELTCTLPLEKDLKVTLYDYDLLSKDEKIGETVIDLENRLLSKFGARCGLPQTYCVSGPNQWRDQLRPSQLLHLFCQQHRVKAPVYRTDRVVFQDKEYTVEEIEAGRVPNPHLGPVEERLALHVLQQQGLIPEHVESRPLYSPLQPDIEQGKLQMWVDLFPKALGRPGPPFNITPRRARRFFLRCIIWNTKDVILDDLSITGEKMSDIYVKGWMVGFEEHKQKTDVHYRSLGGEGNFNWRFVFPFDYLPAEQVCTVSKKDAFWRLDKTESKIPARVVFQIWDNDKFSFDDFLGSLQLDLNHMPKPAKTAEKCSADQLEDTFHPERFVSLFEQKTVKGWWPCVAEEGEKKILAGKLEMTLEIVTESEHEERPAGHGRDEPNMNPKLEDPRRPDTSFLWFTSPYKTMKFILWRRFRCAIIFFLILFIFLLFLGIFVYSFPNYAAMKLVKPFS.

Positions 1–101 (MLRVFILYAE…LATPSLSASF (101 aa)) constitute a C2 1 domain. 4 residues coordinate Ca(2+): Asp-18, Ile-19, Asp-21, and Asn-40. Residues 132–144 (TFPPLTPLEPSPT) are compositionally biased toward pro residues. Residues 132 to 221 (TFPPLTPLEP…SKPLSDKPQD (90 aa)) form a disordered region. Positions 155-172 (GGEEDTEDQGLTGDEAEP) are enriched in acidic residues. Thr-166 carries the phosphothreonine modification. C2 domains follow at residues 205–323 (KRSA…RKWL), 362–498 (DKED…EEEP), 1138–1264 (GVNR…PLTR), 1312–1440 (PPPQ…EESP), 1588–1706 (PLPP…ARCG), and 1822–1970 (GRPG…EKCS). 9 residues coordinate Ca(2+): Asp-411, Asp-419, Asp-467, Asp-469, Asp-475, Asp-1170, Asp-1176, Asp-1232, and Asp-1234. 7 residues coordinate Ca(2+): Asp-1621, Asp-1627, Asp-1676, Asp-1678, Asp-1941, Ser-1944, and Asp-1947. The interval 2021–2044 (ESEHEERPAGHGRDEPNMNPKLED) is disordered. Residues 2074 to 2094 (IIFFLILFIFLLFLGIFVYSF) form a helical membrane-spanning segment.

The protein belongs to the ferlin family. In terms of assembly, interacts with CACNA1S, CAV3 and PARVB. Interacts with ANXA1; the interaction is Ca(2+)- and injury state-dependent. Interacts with ANXA2; the interaction is Ca(2+)- and injury state-dependent. Interacts with AHNAK; the interaction is direct and Ca(2+)-independent. Interacts with AHNAK2; the interaction is direct and Ca(2+)-independent. Interacts with TRIM72/MG53; interaction is required for transport to sites of cell injury during repair patch formation. Interacts with RIPOR2; this interaction occurs during early myogenic differentiation. Requires Ca(2+) as cofactor.

The protein resides in the cell membrane. The protein localises to the sarcolemma. It is found in the cytoplasmic vesicle membrane. In terms of biological role, key calcium ion sensor involved in the Ca(2+)-triggered synaptic vesicle-plasma membrane fusion. Plays a role in the sarcolemma repair mechanism of both skeletal muscle and cardiomyocytes that permits rapid resealing of membranes disrupted by mechanical stress. In Bos taurus (Bovine), this protein is Dysferlin (DYSF).